The primary structure comprises 243 residues: Homeobox protein goosecoid isoform A (243 aa).

The homeobox DNA-binding region spans 148 to 207 (KRRHRTIFTDEQLEALENLFQETKYPDVGTREQLARRVHLREEKVEVWFKNRRAKWRRQK). The interval 201 to 243 (AKWRRQKRSSSEESENAQKWNKSSKNSAEKADEQVKSDLDSDS) is disordered. Residues 217 to 226 (AQKWNKSSKN) are compositionally biased toward polar residues. Over residues 227–243 (SAEKADEQVKSDLDSDS) the composition is skewed to basic and acidic residues.

Belongs to the paired homeobox family. Bicoid subfamily. In terms of tissue distribution, at the start of gastrulation, it is found in a patch of cells encompassing 60 degrees of arc on the dorsal marginal zone.

The protein resides in the nucleus. Functionally, plays a central role in executing Spemann's organizer phenomenon (the dorsal blastopore lip of the early Xenopus laevis gastrula can organize a complete secondary body axis when transplanted to another embryo). The protein is Homeobox protein goosecoid isoform A (gsc-a) of Xenopus laevis (African clawed frog).